An 83-amino-acid polypeptide reads, in one-letter code: Cytochrome b559 subunit alpha (83 aa).

A helical transmembrane segment spans residues 21–35 (VIHSITIPSLFIAGW). H23 lines the heme pocket.

This sequence belongs to the PsbE/PsbF family. In terms of assembly, heterodimer of an alpha subunit and a beta subunit. PSII is composed of 1 copy each of membrane proteins PsbA, PsbB, PsbC, PsbD, PsbE, PsbF, PsbH, PsbI, PsbJ, PsbK, PsbL, PsbM, PsbT, PsbX, PsbY, PsbZ, Psb30/Ycf12, at least 3 peripheral proteins of the oxygen-evolving complex and a large number of cofactors. It forms dimeric complexes. Heme b is required as a cofactor.

The protein resides in the plastid. It localises to the chloroplast thylakoid membrane. In terms of biological role, this b-type cytochrome is tightly associated with the reaction center of photosystem II (PSII). PSII is a light-driven water:plastoquinone oxidoreductase that uses light energy to abstract electrons from H(2)O, generating O(2) and a proton gradient subsequently used for ATP formation. It consists of a core antenna complex that captures photons, and an electron transfer chain that converts photonic excitation into a charge separation. This is Cytochrome b559 subunit alpha from Ginkgo biloba (Ginkgo).